Here is a 400-residue protein sequence, read N- to C-terminus: Nicotinate phosphoribosyltransferase (400 aa).

His-220 is subject to Phosphohistidine; by autocatalysis.

It belongs to the NAPRTase family. Post-translationally, transiently phosphorylated on a His residue during the reaction cycle. Phosphorylation strongly increases the affinity for substrates and increases the rate of nicotinate D-ribonucleotide production. Dephosphorylation regenerates the low-affinity form of the enzyme, leading to product release.

It carries out the reaction nicotinate + 5-phospho-alpha-D-ribose 1-diphosphate + ATP + H2O = nicotinate beta-D-ribonucleotide + ADP + phosphate + diphosphate. Its pathway is cofactor biosynthesis; NAD(+) biosynthesis; nicotinate D-ribonucleotide from nicotinate: step 1/1. Functionally, catalyzes the synthesis of beta-nicotinate D-ribonucleotide from nicotinate and 5-phospho-D-ribose 1-phosphate at the expense of ATP. This chain is Nicotinate phosphoribosyltransferase, found in Shigella dysenteriae serotype 1 (strain Sd197).